The chain runs to 444 residues: MAAAEVFGGCVLEGSVRVSGAKNSTTKLLVASLLSDRKCVLRNVPDIGDVRLTVELCRSLGSIVHWDKQAEVIEIHTPEIHMSEVSAQFSRVNRIPILLLGALLARCPEGVVVPCVGGDAIGERTLNFHFEGLEQLGAKVAYDGHGYQAAAPKGLIGAYITLPYPSVGATENLILASVRAQGRTIIKNAALEVEILDLILFLQKAGVEITTDNDRTIEIFGCEDFYEVDHWVIPDKIEAASFGMAAVLTGGRVFVENAEQHLMIPFLKTLRSIGGGFSVTETGIEFFYNEPLKGGVVLETDVHPGFLTDWQQPFSVLLSQAEGSSVIHETVHENRLGYLRGLQKMGANCELFYQCLSSKACRYATGNFPHSAIIHGVTPLKASQLVIPDLRAGFAYIMAALIAEGGPSLIKNTQLLDRGYYNWVDKLNSLGAKIHLLSLDPVAF.

Residue 22-23 participates in phosphoenolpyruvate binding; it reads KN. R94 is a binding site for UDP-N-acetyl-alpha-D-glucosamine. D119 acts as the Proton donor in catalysis. Positions 309 and 331 each coordinate UDP-N-acetyl-alpha-D-glucosamine.

It belongs to the EPSP synthase family. MurA subfamily.

It localises to the cytoplasm. The enzyme catalyses phosphoenolpyruvate + UDP-N-acetyl-alpha-D-glucosamine = UDP-N-acetyl-3-O-(1-carboxyvinyl)-alpha-D-glucosamine + phosphate. Its pathway is cell wall biogenesis; peptidoglycan biosynthesis. In terms of biological role, cell wall formation. Adds enolpyruvyl to UDP-N-acetylglucosamine. This is UDP-N-acetylglucosamine 1-carboxyvinyltransferase from Chlamydia abortus (strain DSM 27085 / S26/3) (Chlamydophila abortus).